Here is a 778-residue protein sequence, read N- to C-terminus: Gelsolin (778 aa).

A signal peptide spans 1–23; that stretch reads MGKQGFGYIFLTIFCTMALKLNC. Positions 49 to 172 are actin-severing; the sequence is MVEHAEFSKA…YKAGGVASGF (124 aa). One copy of the Gelsolin-like 1 repeat lies at 72-154; that stretch reads FDLVPVPKNL…VQGHESSTFL (83 aa). Ca(2+) is bound by residues glycine 88, aspartate 89, glutamate 120, aspartate 132, glycine 137, and alanine 139. Positions 119–122 are actin-actin interfilament contact point; sequence DERG. 158 to 165 contributes to the a 1,2-diacyl-sn-glycero-3-phospho-(1D-myo-inositol-4,5-bisphosphate) binding site; it reads KSGIKYKA. Valine 168 is a Ca(2+) binding site. 184 to 192 contributes to the a 1,2-diacyl-sn-glycero-3-phospho-(1D-myo-inositol-4,5-bisphosphate) binding site; sequence RLLQVKGRR. The stretch at 193 to 266 is one Gelsolin-like 2 repeat; sequence TVRATEVPVS…SEEGAEREEM (74 aa). Residues glycine 209 and aspartate 210 each coordinate Ca(2+). A disulfide bridge connects residues cysteine 211 and cysteine 224. Residues glutamate 232, aspartate 282, glutamate 325, aspartate 326, glutamate 350, glycine 467, aspartate 468, glutamate 498, aspartate 510, glycine 515, proline 517, threonine 547, asparagine 587, aspartate 588, glutamate 610, aspartate 692, aspartate 693, and glutamate 715 each contribute to the Ca(2+) site. 2 Gelsolin-like repeats span residues 313–385 and 451–532; these read DENP…TPLF and SEKV…PHLM. The interval 430–778 is actin-binding, Ca-sensitive; sequence AAQHGMEDDG…LQRAMADVDV (349 aa). Gelsolin-like repeat units follow at residues 574-638 and 677-752; these read AVEL…DNFW and IEEV…PPTF.

It belongs to the villin/gelsolin family. Binds to actin and to fibronectin. As to expression, highly expressed in homogene cells of the basilar papilla. Also detected in subcutaneous layer of the skin.

The protein resides in the secreted. It localises to the cytoplasm. It is found in the cytoskeleton. Calcium-regulated, actin-modulating protein that binds to the plus (or barbed) ends of actin monomers or filaments, preventing monomer exchange (end-blocking or capping). It can promote the assembly of monomers into filaments (nucleation) as well as sever filaments already formed. Plays a role in ciliogenesis. This Gallus gallus (Chicken) protein is Gelsolin (GSN).